Reading from the N-terminus, the 368-residue chain is Cytoskeleton protein RodZ (368 aa).

The Cytoplasmic segment spans residues Met1–Gly111. Positions Leu19–Leu79 constitute an HTH cro/C1-type domain. The H-T-H motif DNA-binding region spans Gln30–Glu49. Residues Trp112–Trp132 traverse the membrane as a helical; Signal-anchor for type II membrane protein segment. At Trp133–Glu368 the chain is on the periplasmic side. Positions Ser151–Thr243 are disordered. Residues Ser193–Thr221 are compositionally biased toward low complexity. A compositionally biased stretch (polar residues) spans Val229–Thr243.

The protein belongs to the RodZ family.

It is found in the cell inner membrane. Cytoskeletal protein that is involved in cell-shape control through regulation of the length of the long axis. The polypeptide is Cytoskeleton protein RodZ (Yersinia pseudotuberculosis serotype O:3 (strain YPIII)).